The primary structure comprises 434 residues: Enolase (434 aa).

(2R)-2-phosphoglycerate is bound at residue Q163. The active-site Proton donor is the E205. Residues D242, E291, and D318 each contribute to the Mg(2+) site. (2R)-2-phosphoglycerate contacts are provided by K343, R372, S373, and K394. K343 acts as the Proton acceptor in catalysis.

It belongs to the enolase family. Mg(2+) serves as cofactor.

The protein localises to the cytoplasm. The protein resides in the secreted. It is found in the cell surface. The enzyme catalyses (2R)-2-phosphoglycerate = phosphoenolpyruvate + H2O. It participates in carbohydrate degradation; glycolysis; pyruvate from D-glyceraldehyde 3-phosphate: step 4/5. Functionally, catalyzes the reversible conversion of 2-phosphoglycerate (2-PG) into phosphoenolpyruvate (PEP). It is essential for the degradation of carbohydrates via glycolysis. The chain is Enolase from Streptococcus gordonii (strain Challis / ATCC 35105 / BCRC 15272 / CH1 / DL1 / V288).